The sequence spans 232 residues: Large ribosomal subunit protein uL1 (232 aa).

It belongs to the universal ribosomal protein uL1 family. As to quaternary structure, part of the 50S ribosomal subunit.

Binds directly to 23S rRNA. The L1 stalk is quite mobile in the ribosome, and is involved in E site tRNA release. Its function is as follows. Protein L1 is also a translational repressor protein, it controls the translation of the L11 operon by binding to its mRNA. This chain is Large ribosomal subunit protein uL1, found in Stenotrophomonas maltophilia (strain K279a).